The following is a 230-amino-acid chain: Prolactin-6A1 (230 aa).

The first 29 residues, 1 to 29, serve as a signal peptide directing secretion; that stretch reads MLSLSQPCFSGTLLMLLASNFLLWKNVAP. Asn-57 carries N-linked (GlcNAc...) asparagine glycosylation. Cystine bridges form between Cys-89-Cys-205 and Cys-222-Cys-230.

This sequence belongs to the somatotropin/prolactin family. As to expression, expressed in both placenta and decidual tissues. Detected first in deciduals cells early in gestation and in trophoblasts later in pregnancy.

It localises to the secreted. The polypeptide is Prolactin-6A1 (Prl6a1) (Mus musculus (Mouse)).